A 699-amino-acid chain; its full sequence is Endoplasmic reticulum mannosyl-oligosaccharide 1,2-alpha-mannosidase (699 aa).

Residues 1 to 84 (MAACEGRRSG…WKQLSRLQRN (84 aa)) are Cytoplasmic-facing. The chain crosses the membrane as a helical; Signal-anchor for type II membrane protein span at residues 85-105 (MILFLLAFLLFCGLLFYINLA). The Lumenal portion of the chain corresponds to 106–699 (DHWKALAFRL…AHPLPIWTPA (594 aa)). The interval 125–243 (IAGLKPANPP…LPPARTQGTP (119 aa)) is disordered. Residues 176-201 (DLKDGTQEEATKRQEAPVDPRPEGDP) are compositionally biased toward basic and acidic residues. Glu-330 (proton donor) is an active-site residue. Asp-463 is an active-site residue. An intrachain disulfide couples Cys-527 to Cys-556. The Proton donor role is filled by Glu-570. Glu-599 is an active-site residue. Thr-688 lines the Ca(2+) pocket.

The protein belongs to the glycosyl hydrolase 47 family. It depends on Ca(2+) as a cofactor. Widely expressed.

Its subcellular location is the endoplasmic reticulum membrane. The catalysed reaction is N(4)-(alpha-D-Man-(1-&gt;2)-alpha-D-Man-(1-&gt;2)-alpha-D-Man-(1-&gt;3)-[alpha-D-Man-(1-&gt;2)-alpha-D-Man-(1-&gt;3)-[alpha-D-Man-(1-&gt;2)-alpha-D-Man-(1-&gt;6)]-alpha-D-Man-(1-&gt;6)]-beta-D-Man-(1-&gt;4)-beta-D-GlcNAc-(1-&gt;4)-beta-D-GlcNAc)-L-asparaginyl-[protein] (N-glucan mannose isomer 9A1,2,3B1,2,3) + 4 H2O = N(4)-(alpha-D-Man-(1-&gt;3)-[alpha-D-Man-(1-&gt;3)-[alpha-D-Man-(1-&gt;6)]-alpha-D-Man-(1-&gt;6)]-beta-D-Man-(1-&gt;4)-beta-D-GlcNAc-(1-&gt;4)-beta-D-GlcNAc)-L-asparaginyl-[protein] (N-glucan mannose isomer 5A1,2) + 4 beta-D-mannose. It catalyses the reaction N(4)-(alpha-D-Man-(1-&gt;2)-alpha-D-Man-(1-&gt;2)-alpha-D-Man-(1-&gt;3)-[alpha-D-Man-(1-&gt;3)-[alpha-D-Man-(1-&gt;2)-alpha-D-Man-(1-&gt;6)]-alpha-D-Man-(1-&gt;6)]-beta-D-Man-(1-&gt;4)-beta-D-GlcNAc-(1-&gt;4)-beta-D-GlcNAc)-L-asparaginyl-[protein] (N-glucan mannose isomer 8A1,2,3B1,3) + 3 H2O = N(4)-(alpha-D-Man-(1-&gt;3)-[alpha-D-Man-(1-&gt;3)-[alpha-D-Man-(1-&gt;6)]-alpha-D-Man-(1-&gt;6)]-beta-D-Man-(1-&gt;4)-beta-D-GlcNAc-(1-&gt;4)-beta-D-GlcNAc)-L-asparaginyl-[protein] (N-glucan mannose isomer 5A1,2) + 3 beta-D-mannose. It participates in protein modification; protein glycosylation. Its activity is regulated as follows. Inhibited by both 1-deoxymannojirimycin (dMNJ) and kifunensine. Functionally, involved in glycoprotein quality control targeting of misfolded glycoproteins for degradation. It primarily trims a single alpha-1,2-linked mannose residue from Man(9)GlcNAc(2) to produce Man(8)GlcNAc(2), but at high enzyme concentrations, as found in the ER quality control compartment (ERQC), it further trims the carbohydrates to Man(5-6)GlcNAc(2). The polypeptide is Endoplasmic reticulum mannosyl-oligosaccharide 1,2-alpha-mannosidase (MAN1B1) (Homo sapiens (Human)).